The primary structure comprises 78 residues: Large ribosomal subunit protein bL28B (78 aa).

The interval 1-29 (MSAHCQVTGRKPGFGNTVSHSHRRSRRRW) is disordered. The segment covering 20–29 (HSHRRSRRRW) has biased composition (basic residues).

Belongs to the bacterial ribosomal protein bL28 family.

This Mycobacterium bovis (strain ATCC BAA-935 / AF2122/97) protein is Large ribosomal subunit protein bL28B (rpmB2).